The following is a 75-amino-acid chain: Tautomerase PptA (75 aa).

Catalysis depends on Pro2, which acts as the Proton acceptor; via imino nitrogen.

This sequence belongs to the 4-oxalocrotonate tautomerase family. PptA subfamily. Homodimer.

The protein localises to the cytoplasm. The polypeptide is Tautomerase PptA (Escherichia coli (strain SMS-3-5 / SECEC)).